Reading from the N-terminus, the 255-residue chain is tRNA (guanine-N(1)-)-methyltransferase (255 aa).

Residues Gly113 and 133–138 contribute to the S-adenosyl-L-methionine site; that span reads IGDYVL.

It belongs to the RNA methyltransferase TrmD family. As to quaternary structure, homodimer.

The protein resides in the cytoplasm. The catalysed reaction is guanosine(37) in tRNA + S-adenosyl-L-methionine = N(1)-methylguanosine(37) in tRNA + S-adenosyl-L-homocysteine + H(+). In terms of biological role, specifically methylates guanosine-37 in various tRNAs. The protein is tRNA (guanine-N(1)-)-methyltransferase of Serratia proteamaculans (strain 568).